A 562-amino-acid polypeptide reads, in one-letter code: ATP-dependent RNA helicase dbp2 (562 aa).

Positions 132-160 (ETFDEAGFPRYVMDEVKAQGFPAPTAIQS) match the Q motif motif. In terms of domain architecture, Helicase ATP-binding spans 163 to 338 (WPMALSGRDV…ADFLTDFIQV (176 aa)). Position 176–183 (176–183 (AETGSGKT)) interacts with ATP. The DEAD box signature appears at 286–289 (DEAD). The Helicase C-terminal domain maps to 370–515 (HLEKIMEGRE…QIDPRLAEMA (146 aa)). The segment at 526–548 (GGYRGRGGGGWRGGRGGGGGGGS) is RNA-binding RGG-box. Positions 536-550 (WRGGRGGGGGGGSVG) are enriched in gly residues. A disordered region spans residues 536 to 562 (WRGGRGGGGGGGSVGGANALPLNNRRW).

It belongs to the DEAD box helicase family. DDX5/DBP2 subfamily. In terms of assembly, associates with polysomes.

The protein resides in the cytoplasm. It is found in the nucleus. The enzyme catalyses ATP + H2O = ADP + phosphate + H(+). Functionally, ATP-dependent RNA helicase involved nonsense-mediated mRNA decay and ribosome biogenesis through rRNA processing. The protein is ATP-dependent RNA helicase dbp2 (drh-1) of Neurospora crassa (strain ATCC 24698 / 74-OR23-1A / CBS 708.71 / DSM 1257 / FGSC 987).